The following is a 123-amino-acid chain: Holo-[acyl-carrier-protein] synthase (123 aa).

Mg(2+) is bound by residues aspartate 7 and glutamate 56.

The protein belongs to the P-Pant transferase superfamily. AcpS family. Mg(2+) serves as cofactor.

The protein localises to the cytoplasm. It carries out the reaction apo-[ACP] + CoA = holo-[ACP] + adenosine 3',5'-bisphosphate + H(+). Its function is as follows. Transfers the 4'-phosphopantetheine moiety from coenzyme A to a Ser of acyl-carrier-protein. The polypeptide is Holo-[acyl-carrier-protein] synthase (Carboxydothermus hydrogenoformans (strain ATCC BAA-161 / DSM 6008 / Z-2901)).